The following is a 428-amino-acid chain: Adenylosuccinate synthetase (428 aa).

GTP-binding positions include 12-18 (GDEGKGK) and 40-42 (GHT). The Proton acceptor role is filled by Asp13. Mg(2+) contacts are provided by Asp13 and Gly40. IMP contacts are provided by residues 13 to 16 (DEGK), 38 to 41 (NAGH), Thr130, Arg144, Gln225, Thr240, and Arg304. His41 acts as the Proton donor in catalysis. Position 300-306 (300-306 (VNTGRSR)) interacts with substrate. Residues Arg306, 332–334 (KID), and 414–416 (GVG) contribute to the GTP site.

Belongs to the adenylosuccinate synthetase family. In terms of assembly, homodimer. Mg(2+) is required as a cofactor.

Its subcellular location is the cytoplasm. The enzyme catalyses IMP + L-aspartate + GTP = N(6)-(1,2-dicarboxyethyl)-AMP + GDP + phosphate + 2 H(+). It functions in the pathway purine metabolism; AMP biosynthesis via de novo pathway; AMP from IMP: step 1/2. Its function is as follows. Plays an important role in the de novo pathway of purine nucleotide biosynthesis. Catalyzes the first committed step in the biosynthesis of AMP from IMP. The chain is Adenylosuccinate synthetase from Clostridium beijerinckii (strain ATCC 51743 / NCIMB 8052) (Clostridium acetobutylicum).